The sequence spans 173 residues: Large ribosomal subunit protein uL10 (173 aa).

It belongs to the universal ribosomal protein uL10 family. Part of the ribosomal stalk of the 50S ribosomal subunit. The N-terminus interacts with L11 and the large rRNA to form the base of the stalk. The C-terminus forms an elongated spine to which L12 dimers bind in a sequential fashion forming a multimeric L10(L12)X complex.

In terms of biological role, forms part of the ribosomal stalk, playing a central role in the interaction of the ribosome with GTP-bound translation factors. The chain is Large ribosomal subunit protein uL10 from Chlorobium phaeobacteroides (strain BS1).